The following is a 128-amino-acid chain: Holo-[acyl-carrier-protein] synthase (128 aa).

Mg(2+)-binding residues include aspartate 9 and glutamate 56.

This sequence belongs to the P-Pant transferase superfamily. AcpS family. It depends on Mg(2+) as a cofactor.

It localises to the cytoplasm. The catalysed reaction is apo-[ACP] + CoA = holo-[ACP] + adenosine 3',5'-bisphosphate + H(+). Its function is as follows. Transfers the 4'-phosphopantetheine moiety from coenzyme A to a Ser of acyl-carrier-protein. In Pelagibacter ubique (strain HTCC1062), this protein is Holo-[acyl-carrier-protein] synthase.